The chain runs to 92 residues: Neurophysin 2 (92 aa).

7 disulfide bridges follow: Cys10/Cys54, Cys13/Cys27, Cys21/Cys44, Cys28/Cys34, Cys61/Cys73, Cys67/Cys85, and Cys74/Cys79.

It belongs to the vasopressin/oxytocin family. In terms of assembly, there is an equilibrium between the monomeric and dimeric forms. On peptide binding the dimeric form predominates. In terms of processing, a shorter neurophysin molecule (1-90) also exists and is probably derived from the complete protein by proteolytic degradation (in vivo or after extraction).

The protein resides in the secreted. In terms of biological role, neurophysin 2 specifically binds vasopressin. The sequence is that of Neurophysin 2 (AVP) from Loxodonta africana (African elephant).